The sequence spans 214 residues: MQATVHESKQSIMQRILTVFVFTLLIATVGLFIGQFVPVALMLPLSILEVAMIILAFWMRRRKAVGYAFVYTFAFVSGITLFPIVSHYASIAGAYVVLEAFGSTFVIFAVLGTIGAKMKKDLSFLWSFLLVAVLALAVVGIFNIFSPLNSAAMMAYSVIGTIVFSLYILYDLNQIKHRHITEDLIPVMALSLYLDFINLFINLLRFFGILSSDD.

Over 1–15 (MQATVHESKQSIMQR) the chain is Cytoplasmic. A helical transmembrane segment spans residues 16-37 (ILTVFVFTLLIATVGLFIGQFV). Topologically, residues 38-44 (PVALMLP) are extracellular. Residues 45 to 59 (LSILEVAMIILAFWM) traverse the membrane as a helical segment. The Cytoplasmic segment spans residues 60–66 (RRRKAVG). A helical transmembrane segment spans residues 67-86 (YAFVYTFAFVSGITLFPIVS). The Extracellular segment spans residues 87–95 (HYASIAGAY). The chain crosses the membrane as a helical span at residues 96-117 (VVLEAFGSTFVIFAVLGTIGAK). The Cytoplasmic segment spans residues 118-122 (MKKDL). A helical membrane pass occupies residues 123–146 (SFLWSFLLVAVLALAVVGIFNIFS). The Extracellular segment spans residues 147–151 (PLNSA). Residues 152 to 175 (AMMAYSVIGTIVFSLYILYDLNQI) traverse the membrane as a helical segment. Topologically, residues 176–185 (KHRHITEDLI) are cytoplasmic. A helical membrane pass occupies residues 186-207 (PVMALSLYLDFINLFINLLRFF). The Extracellular segment spans residues 208 to 214 (GILSSDD).

Belongs to the BI1 family. Monomer.

It is found in the cell membrane. The enzyme catalyses Ca(2+)(in) = Ca(2+)(out). With respect to regulation, the calcium-release activity is mediated by two factors: pH and transmembrane ion gradient. It was proposed, based on an MD simulation, that the conserved aspartyl dyad (Asp-171-Asp-195) regulates Ca(2+) binding, pH sensing, and the channel pore opening and closing, and that protonation of Asp-171 probably weakens its interaction with Arg-60, facilitating the opening of the channel. Another study using nanodiscs suggests that Asp-171 is not a pH sensor regulating the pore dynamics; instead, it is only involved in the gating of calcium ions. When crystallized in detergents at different pH conditions, the transition between open and closed conformations is regulated by pH. Ca(2+) binding is inhibited by Na(+), K(+), Li(+), Yb(3+) and Lu(3+), but not by Mg(2+) and Mn(2+). In terms of biological role, calcium channel that probably plays a role in the regulation of calcium homeostasis. Uptakes calcium ions and mediates calcium flux in proteoliposomes in a pH-dependent manner. When expressed in E.coli in the presence of high extracellular calcium concentrations, shows calcium-leak activity, increasing intracellular calcium concentration. It can also mediate Ca(2+) flux from the endoplamic reticulum (ER) when expressed in permeabilized mammalian cells. Calcium transport activity is also detected in ER-like lipid vesicles. This Bacillus subtilis (strain 168) protein is pH-sensitive calcium channel.